The sequence spans 203 residues: ER membrane protein complex subunit 8/9 homolog (203 aa).

An MPN domain is found at 4–140 (YKVSERAYAK…IQVFNCPGDS (137 aa)).

Belongs to the EMC8/EMC9 family. In terms of assembly, component of the ER membrane protein complex (EMC).

The protein resides in the endoplasmic reticulum membrane. Part of the endoplasmic reticulum membrane protein complex (EMC) that enables the energy-independent insertion into endoplasmic reticulum membranes of newly synthesized multi-pass membrane proteins like rhodopsins. The protein is ER membrane protein complex subunit 8/9 homolog of Drosophila melanogaster (Fruit fly).